Here is a 455-residue protein sequence, read N- to C-terminus: Kynurenine 3-monooxygenase (455 aa).

2 helical membrane passes run 393-416 (WLFRLFPTIWVPLYNSVSFTSMPY) and 429-453 (LLWRTFLGFIVVGLGVTGSAIYWQR).

Belongs to the aromatic-ring hydroxylase family. KMO subfamily. FAD serves as cofactor.

It is found in the mitochondrion. Its subcellular location is the membrane. The catalysed reaction is L-kynurenine + NADPH + O2 + H(+) = 3-hydroxy-L-kynurenine + NADP(+) + H2O. The protein operates within cofactor biosynthesis; NAD(+) biosynthesis; quinolinate from L-kynurenine: step 1/3. Catalyzes the hydroxylation of L-kynurenine (L-Kyn) to form 3-hydroxy-L-kynurenine (L-3OHKyn). Required for synthesis of quinolinic acid. This chain is Kynurenine 3-monooxygenase, found in Drosophila willistoni (Fruit fly).